Here is a 413-residue protein sequence, read N- to C-terminus: Zinc finger protein 821 (413 aa).

Positions 26 to 83 are disordered; it reads RQAMMKTDFPGDLGSQRQAIQQLRDQDSSSSDSEGDEEETTQDEVSSHTSEEDGGVVK. Positions 58–67 are enriched in acidic residues; sequence SEGDEEETTQ. 2 C2H2-type zinc fingers span residues 117 to 141 and 151 to 173; these read QLCQCPLCQLDCGSREQLIAHVYQH and YMCPVCGRALSSPGSLGRHLLIH. Residues 260 to 367 are a coiled coil; it reads ALRRQNEPLE…EKMDMMLRAQ (108 aa). Residues 279–320 form a disordered region; the sequence is RTAKKSRRDNETPEEREVRRMRDREAKRLQRMQETDEQRARR.

It belongs to the krueppel C2H2-type zinc-finger protein family.

It localises to the nucleus. In terms of biological role, may be involved in transcriptional regulation. This Mus musculus (Mouse) protein is Zinc finger protein 821 (Znf821).